A 610-amino-acid chain; its full sequence is Scarecrow-like protein 11 (610 aa).

Disordered regions lie at residues 32–54, 98–159, and 186–220; these read NNLF…PPTV, QQSP…RRNK, and QEEE…HKTN. 2 stretches are compositionally biased toward low complexity: residues 41–52 and 99–119; these read SQNQSSPNDSPP and QSPE…GDQD. 2 stretches are compositionally biased toward polar residues: residues 123–137 and 209–220; these read PSTT…SSGE and GSSNKSKTHKTN. The 384-residue stretch at 215–598 folds into the GRAS domain; it reads KTHKTNTVDL…RVIYAFSCWK (384 aa). Positions 222–283 are leucine repeat I (LRI); the sequence is VDLRSLLTQC…ARITGNISPP (62 aa). Residues 302 to 367 form a VHIID region; sequence YKLFVHTCPI…GGPPMLRVTG (66 aa). Positions 333-337 match the VHIID motif; it reads LHIVD. The segment at 383-415 is leucine repeat II (LRII); sequence ETGRRLKRFCDQFNVPFEFNFIAKKWETITLDE. The PFYRE stretch occupies residues 424-520; that stretch reads TVVNCIHRLQ…RELLVRDAMS (97 aa). Residues 523–598 are SAW; sequence SCEGAERFAR…RVIYAFSCWK (76 aa).

The protein belongs to the GRAS family. Highly expressed in roots and at lower levels in leaves and sepals. Expressed in siliques.

It is found in the nucleus. In terms of biological role, probable transcription factor involved in plant development. In Arabidopsis thaliana (Mouse-ear cress), this protein is Scarecrow-like protein 11 (SCL11).